The primary structure comprises 282 residues: sn-glycerol-3-phosphate transport system permease protein UgpE (282 aa).

The next 6 membrane-spanning stretches (helical) occupy residues 14 to 34 (LILI…FVAS), 86 to 106 (MAIA…IVFF), 112 to 132 (MFFF…RILP), 146 to 168 (YAGL…QFFL), 201 to 221 (IAAL…WPLL), and 248 to 268 (WNYV…VVVL). The ABC transmembrane type-1 domain occupies 78-269 (LWNSFVVAMA…IPPILVVVLM (192 aa)).

The protein belongs to the binding-protein-dependent transport system permease family. As to quaternary structure, the complex is composed of two ATP-binding proteins (UgpC), two transmembrane proteins (UgpA and UgpE) and a solute-binding protein (UgpB).

The protein localises to the cell inner membrane. In terms of biological role, part of the ABC transporter complex UgpBAEC involved in sn-glycerol-3-phosphate (G3P) import. Probably responsible for the translocation of the substrate across the membrane. The protein is sn-glycerol-3-phosphate transport system permease protein UgpE (ugpE) of Brucella suis biovar 1 (strain 1330).